Here is a 295-residue protein sequence, read N- to C-terminus: tRNA(Ile)-lysidine synthase (295 aa).

10-15 (SGGPDS) contributes to the ATP binding site.

Belongs to the tRNA(Ile)-lysidine synthase family.

The protein localises to the cytoplasm. It carries out the reaction cytidine(34) in tRNA(Ile2) + L-lysine + ATP = lysidine(34) in tRNA(Ile2) + AMP + diphosphate + H(+). Functionally, ligates lysine onto the cytidine present at position 34 of the AUA codon-specific tRNA(Ile) that contains the anticodon CAU, in an ATP-dependent manner. Cytidine is converted to lysidine, thus changing the amino acid specificity of the tRNA from methionine to isoleucine. The sequence is that of tRNA(Ile)-lysidine synthase from Malacoplasma penetrans (strain HF-2) (Mycoplasma penetrans).